Consider the following 693-residue polypeptide: Heat shock protein homolog SSE2 (693 aa).

Positions 653–693 (LRANQETSKMNDIAEKLAEQRRARAASDDSDDNNDENMDLD) are disordered. The segment covering 664 to 679 (DIAEKLAEQRRARAAS) has biased composition (basic and acidic residues). The span at 680–693 (DDSDDNNDENMDLD) shows a compositional bias: acidic residues.

Belongs to the heat shock protein 70 family.

In terms of biological role, has a calcium-dependent calmodulin-binding activity. The polypeptide is Heat shock protein homolog SSE2 (SSE2) (Saccharomyces cerevisiae (strain ATCC 204508 / S288c) (Baker's yeast)).